A 283-amino-acid polypeptide reads, in one-letter code: uncharacterized protein (283 aa).

Residues 1-21 form a disordered region; that stretch reads MSAYTHPMERELSGLSSRGNS. A helical transmembrane segment spans residues 41–61; sequence SIFIASLVTFGVLMITLLIAL.

It belongs to the APS1/VSP family.

It localises to the membrane. This is an uncharacterized protein from Arabidopsis thaliana (Mouse-ear cress).